The primary structure comprises 311 residues: Tyrosine recombinase XerD (311 aa).

The Core-binding (CB) domain occupies 3 to 88 (DMSAAYVEAF…ALRQFYKFLY (86 aa)). In terms of domain architecture, Tyr recombinase spans 109-298 (TLPKTLSIED…LEERLHDLVQ (190 aa)). Active-site residues include Arg156, Lys180, His250, Arg253, and His276. Tyr285 acts as the O-(3'-phospho-DNA)-tyrosine intermediate in catalysis.

It belongs to the 'phage' integrase family. XerD subfamily. As to quaternary structure, forms a cyclic heterotetrameric complex composed of two molecules of XerC and two molecules of XerD.

It localises to the cytoplasm. In terms of biological role, site-specific tyrosine recombinase, which acts by catalyzing the cutting and rejoining of the recombining DNA molecules. The XerC-XerD complex is essential to convert dimers of the bacterial chromosome into monomers to permit their segregation at cell division. It also contributes to the segregational stability of plasmids. The polypeptide is Tyrosine recombinase XerD (Rhizobium meliloti (strain 1021) (Ensifer meliloti)).